We begin with the raw amino-acid sequence, 432 residues long: Adenosine 3'-phospho 5'-phosphosulfate transporter 1 (432 aa).

The next 9 helical transmembrane spans lie at 5–25 (WWAVVVLAAFPSLGAGGETPE), 40–60 (VVNAAGYASFMVPGYLLVQYF), 109–129 (ALKLLFCATGLQVSYLTWGVL), 154–174 (FLVLMNRVLALIVAGLSCVLC), 238–258 (WEYLTATLISIGVSMFLLSSG), 265–285 (PATTLSGLILLAGYIAFDSFT), 299–319 (SVQMMFGVNFFSCLFTVGSLL), 353–373 (LFIFYTIGQFGAAVFTIIMTL), and 387–407 (GHTVTVVGGLGVAVVFAALLL). A Phosphoserine modification is found at serine 427.

Belongs to the nucleotide-sugar transporter family. SLC35B subfamily. As to expression, highly expressed in the placenta, pancreas, mammary gland and skeletal muscle. Weakly or not expressed in colon, heart and prostate. Expressed in the brain, predominantly in frontal lobe gray matter, subcortical frontal white matter and cerebellum.

It is found in the golgi apparatus membrane. It catalyses the reaction 3'-phosphoadenylyl sulfate(in) + adenosine 3',5'-bisphosphate(out) = 3'-phosphoadenylyl sulfate(out) + adenosine 3',5'-bisphosphate(in). Its function is as follows. Probably functions as a 3'-phosphoadenylyl sulfate:adenosine 3',5'-bisphosphate antiporter at the Golgi membranes. Mediates the transport from the cytosol into the lumen of the Golgi of 3'-phosphoadenylyl sulfate/adenosine 3'-phospho 5'-phosphosulfate (PAPS), a universal sulfuryl donor for sulfation events that take place in that compartment. This is Adenosine 3'-phospho 5'-phosphosulfate transporter 1 from Homo sapiens (Human).